The sequence spans 865 residues: Probable beta-glucosidase J (865 aa).

Residue aspartate 233 is part of the active site. 4 N-linked (GlcNAc...) asparagine glycosylation sites follow: asparagine 330, asparagine 447, asparagine 503, and asparagine 764. Residues 411-579 form the PA14 domain; that stretch reads TGQPGYTFRV…DTDTAIQQAV (169 aa).

The protein belongs to the glycosyl hydrolase 3 family.

The protein localises to the secreted. The catalysed reaction is Hydrolysis of terminal, non-reducing beta-D-glucosyl residues with release of beta-D-glucose.. It functions in the pathway glycan metabolism; cellulose degradation. Its function is as follows. Beta-glucosidases are one of a number of cellulolytic enzymes involved in the degradation of cellulosic biomass. Catalyzes the last step releasing glucose from the inhibitory cellobiose. The protein is Probable beta-glucosidase J (bglJ) of Aspergillus fumigatus (strain ATCC MYA-4609 / CBS 101355 / FGSC A1100 / Af293) (Neosartorya fumigata).